The primary structure comprises 527 residues: Probable bifunctional tRNA threonylcarbamoyladenosine biosynthesis protein (527 aa).

The segment at 1–323 is kae1; sequence MPDIMPDDGL…YRADEVEVAW (323 aa). Residues His110, His114, and Tyr131 each coordinate Fe cation. Residues 131 to 135, Asp163, Gly176, Glu180, and Asn256 each bind L-threonylcarbamoyladenylate; that span reads YASGA. Asp284 is a binding site for Fe cation. Residues 333–527 form the Protein kinase domain; it reads IGPHEGGVAR…HEVELRGRYL (195 aa). ATP-binding positions include 340–348 and Lys357; that span reads VARGAEAVV. The Proton acceptor; for kinase activity role is filled by Asp444.

In the N-terminal section; belongs to the KAE1 / TsaD family. The protein in the C-terminal section; belongs to the protein kinase superfamily. Tyr protein kinase family. BUD32 subfamily. In terms of assembly, component of the KEOPS complex that consists of Kae1, Bud32, Cgi121 and Pcc1; the whole complex dimerizes. Fe(2+) serves as cofactor.

It is found in the cytoplasm. The catalysed reaction is L-seryl-[protein] + ATP = O-phospho-L-seryl-[protein] + ADP + H(+). It carries out the reaction L-threonyl-[protein] + ATP = O-phospho-L-threonyl-[protein] + ADP + H(+). It catalyses the reaction L-threonylcarbamoyladenylate + adenosine(37) in tRNA = N(6)-L-threonylcarbamoyladenosine(37) in tRNA + AMP + H(+). Required for the formation of a threonylcarbamoyl group on adenosine at position 37 (t(6)A37) in tRNAs that read codons beginning with adenine. Is a component of the KEOPS complex that is probably involved in the transfer of the threonylcarbamoyl moiety of threonylcarbamoyl-AMP (TC-AMP) to the N6 group of A37. The Kae1 domain likely plays a direct catalytic role in this reaction. The Bud32 domain probably displays kinase activity that regulates Kae1 function. The protein is Probable bifunctional tRNA threonylcarbamoyladenosine biosynthesis protein of Methanoculleus marisnigri (strain ATCC 35101 / DSM 1498 / JR1).